Consider the following 91-residue polypeptide: Putative regulatory protein Helmi_20580 (91 aa).

The protein belongs to the RemA family.

In Heliobacterium modesticaldum (strain ATCC 51547 / Ice1), this protein is Putative regulatory protein Helmi_20580.